The primary structure comprises 251 residues: Triosephosphate isomerase (251 aa).

Position 9–11 (9–11 (NWK)) interacts with substrate. His96 (electrophile) is an active-site residue. Glu167 acts as the Proton acceptor in catalysis. Substrate is bound by residues Gly173, Ser213, and 234–235 (GG).

It belongs to the triosephosphate isomerase family. Homodimer.

It is found in the cytoplasm. The enzyme catalyses D-glyceraldehyde 3-phosphate = dihydroxyacetone phosphate. The protein operates within carbohydrate biosynthesis; gluconeogenesis. Its pathway is carbohydrate degradation; glycolysis; D-glyceraldehyde 3-phosphate from glycerone phosphate: step 1/1. Its function is as follows. Involved in the gluconeogenesis. Catalyzes stereospecifically the conversion of dihydroxyacetone phosphate (DHAP) to D-glyceraldehyde-3-phosphate (G3P). This chain is Triosephosphate isomerase, found in Phocaeicola vulgatus (strain ATCC 8482 / DSM 1447 / JCM 5826 / CCUG 4940 / NBRC 14291 / NCTC 11154) (Bacteroides vulgatus).